The primary structure comprises 429 residues: Adenylosuccinate synthetase (429 aa).

GTP is bound by residues 13–19 and 41–43; these read GDEGKGK and GHT. Catalysis depends on Asp-14, which acts as the Proton acceptor. Residues Asp-14 and Gly-41 each contribute to the Mg(2+) site. IMP contacts are provided by residues 14 to 17, 39 to 42, Thr-130, Arg-144, Gln-225, Thr-240, and Arg-304; these read DEGK and NAGH. His-42 serves as the catalytic Proton donor. 300–306 provides a ligand contact to substrate; that stretch reads ATTGRRR. GTP is bound by residues Arg-306, 332 to 334, and 417 to 419; these read KLD and STG.

This sequence belongs to the adenylosuccinate synthetase family. As to quaternary structure, homodimer. The cofactor is Mg(2+).

It is found in the cytoplasm. The catalysed reaction is IMP + L-aspartate + GTP = N(6)-(1,2-dicarboxyethyl)-AMP + GDP + phosphate + 2 H(+). Its pathway is purine metabolism; AMP biosynthesis via de novo pathway; AMP from IMP: step 1/2. Plays an important role in the de novo pathway of purine nucleotide biosynthesis. Catalyzes the first committed step in the biosynthesis of AMP from IMP. The protein is Adenylosuccinate synthetase of Buchnera aphidicola subsp. Baizongia pistaciae (strain Bp).